The sequence spans 440 residues: Ribosomal protein uS12 methylthiotransferase RimO (440 aa).

The region spanning 6–116 is the MTTase N-terminal domain; sequence PKVGFVSLGC…VVTAVHEVVP (111 aa). [4Fe-4S] cluster contacts are provided by C15, C51, C80, C149, C153, and C156. Residues 135 to 373 form the Radical SAM core domain; that stretch reads LTPRHYAYLK…MAHQQAISAA (239 aa). The 65-residue stretch at 376 to 440 folds into the TRAM domain; the sequence is QLKVGKEIEV…DEYDLWAEPV (65 aa).

This sequence belongs to the methylthiotransferase family. RimO subfamily. The cofactor is [4Fe-4S] cluster.

It is found in the cytoplasm. It carries out the reaction L-aspartate(89)-[ribosomal protein uS12]-hydrogen + (sulfur carrier)-SH + AH2 + 2 S-adenosyl-L-methionine = 3-methylsulfanyl-L-aspartate(89)-[ribosomal protein uS12]-hydrogen + (sulfur carrier)-H + 5'-deoxyadenosine + L-methionine + A + S-adenosyl-L-homocysteine + 2 H(+). Its function is as follows. Catalyzes the methylthiolation of an aspartic acid residue of ribosomal protein uS12. In Pseudomonas paraeruginosa (strain DSM 24068 / PA7) (Pseudomonas aeruginosa (strain PA7)), this protein is Ribosomal protein uS12 methylthiotransferase RimO.